The primary structure comprises 517 residues: Ribonuclease Y (517 aa).

The chain crosses the membrane as a helical span at residues 1-21 (MIEFLIGLIAAVVGILVGYLI). The KH domain occupies 207 to 271 (LINVVNIKND…IAVRTVELLV (65 aa)). One can recognise an HD domain in the interval 333 to 426 (ALIHSLEVAH…VCTADVLSAA (94 aa)).

The protein belongs to the RNase Y family.

The protein resides in the cell membrane. Its function is as follows. Endoribonuclease that initiates mRNA decay. The sequence is that of Ribonuclease Y from Campylobacter hominis (strain ATCC BAA-381 / DSM 21671 / CCUG 45161 / LMG 19568 / NCTC 13146 / CH001A).